The following is a 558-amino-acid chain: Glucose-6-phosphate isomerase (558 aa).

Position 2 is an N-acetylalanine (A2). N6-acetyllysine is present on K12. K34 carries the N6-(2-hydroxyisobutyryl)lysine modification. S107 bears the Phosphoserine mark. At T109 the chain carries Phosphothreonine. At K142 the chain carries N6-acetyllysine. 159–160 (GS) contacts D-glucose 6-phosphate. Position 185 is a phosphoserine; by CK2 (S185). 210–215 (SKTFTT) provides a ligand contact to D-glucose 6-phosphate. T250 carries the phosphothreonine modification. 3 residues coordinate D-glucose 6-phosphate: Q354, E358, and H389. E358 acts as the Proton donor in catalysis. H389 is a catalytic residue. K454 is modified (N6-acetyllysine; alternate). K454 is subject to N6-malonyllysine; alternate. K454 is subject to N6-succinyllysine; alternate. The residue at position 455 (S455) is a Phosphoserine. K519 contributes to the D-glucose 6-phosphate binding site. Residue K519 is part of the active site.

Belongs to the GPI family. In terms of assembly, homodimer; in the catalytically active form. Monomer in the secreted form. Post-translationally, phosphorylation at Ser-185 by CK2 has been shown to decrease enzymatic activity and may contribute to secretion by a non-classical secretory pathway. ISGylated.

It localises to the cytoplasm. The protein localises to the secreted. The catalysed reaction is alpha-D-glucose 6-phosphate = beta-D-fructose 6-phosphate. It participates in carbohydrate degradation; glycolysis; D-glyceraldehyde 3-phosphate and glycerone phosphate from D-glucose: step 2/4. In terms of biological role, in the cytoplasm, catalyzes the conversion of glucose-6-phosphate to fructose-6-phosphate, the second step in glycolysis, and the reverse reaction during gluconeogenesis. Besides it's role as a glycolytic enzyme, also acts as a secreted cytokine: acts as an angiogenic factor (AMF) that stimulates endothelial cell motility. Acts as a neurotrophic factor, neuroleukin, for spinal and sensory neurons. It is secreted by lectin-stimulated T-cells and induces immunoglobulin secretion. The chain is Glucose-6-phosphate isomerase from Macaca fascicularis (Crab-eating macaque).